Consider the following 338-residue polypeptide: MNLQKFPRHPLTFGPTPIQPLKRLSQHLGGKVELYAKREDCNSGLAFGGNKTRKLEYLIPEAIAGGYDTLVSIGGIQSNQTRQVAAVAAHLGLKCVLVQENWVNYSDAVYDRVGNIEMSRILGADVRLDAAGFDIGIRPSWEQAMADVKQAGGKPFPIPAGCSEHPYGGLGFVGFAEEVRQQEKELGFRFDYIVVCSVTGSTQAGMVVGFAADGRARRVIGIDASATPEKTHAQILRIAQSTADLVELGQDITAEDVVLDTRYGGPEYGLPNEGTLEAIRLCARQEGMLTDPVYEGKSMHGMIERVRNGEFPAGSKVLYAHLGGVPALNAYSFLFRNG.

K51 carries the N6-(pyridoxal phosphate)lysine modification. S78 (nucleophile) is an active-site residue.

It belongs to the ACC deaminase/D-cysteine desulfhydrase family. In terms of assembly, homotrimer. It depends on pyridoxal 5'-phosphate as a cofactor.

The catalysed reaction is 1-aminocyclopropane-1-carboxylate + H2O = 2-oxobutanoate + NH4(+). Functionally, catalyzes a cyclopropane ring-opening reaction, the irreversible conversion of 1-aminocyclopropane-1-carboxylate (ACC) to ammonia and alpha-ketobutyrate. Allows growth on ACC as a nitrogen source. The sequence is that of 1-aminocyclopropane-1-carboxylate deaminase from Acidovorax ebreus (strain TPSY) (Diaphorobacter sp. (strain TPSY)).